A 601-amino-acid polypeptide reads, in one-letter code: Elongation factor 4 (601 aa).

Positions 7 to 189 constitute a tr-type G domain; the sequence is KNIRNFSIVA…AIVTRLPPPQ (183 aa). Residues 19 to 24 and 136 to 139 contribute to the GTP site; these read DHGKST and NKID.

It belongs to the TRAFAC class translation factor GTPase superfamily. Classic translation factor GTPase family. LepA subfamily.

The protein localises to the cell inner membrane. The enzyme catalyses GTP + H2O = GDP + phosphate + H(+). Its function is as follows. Required for accurate and efficient protein synthesis under certain stress conditions. May act as a fidelity factor of the translation reaction, by catalyzing a one-codon backward translocation of tRNAs on improperly translocated ribosomes. Back-translocation proceeds from a post-translocation (POST) complex to a pre-translocation (PRE) complex, thus giving elongation factor G a second chance to translocate the tRNAs correctly. Binds to ribosomes in a GTP-dependent manner. In Methylocella silvestris (strain DSM 15510 / CIP 108128 / LMG 27833 / NCIMB 13906 / BL2), this protein is Elongation factor 4.